The sequence spans 312 residues: tRNA dimethylallyltransferase (312 aa).

11–18 (GPTAAGKS) provides a ligand contact to ATP. 13–18 (TAAGKS) lines the substrate pocket. Interaction with substrate tRNA stretches follow at residues 36–39 (DSAT), 160–164 (QRIQR), and 243–248 (RCVGYR).

It belongs to the IPP transferase family. Monomer. Mg(2+) serves as cofactor.

The catalysed reaction is adenosine(37) in tRNA + dimethylallyl diphosphate = N(6)-dimethylallyladenosine(37) in tRNA + diphosphate. Catalyzes the transfer of a dimethylallyl group onto the adenine at position 37 in tRNAs that read codons beginning with uridine, leading to the formation of N6-(dimethylallyl)adenosine (i(6)A). The chain is tRNA dimethylallyltransferase from Bordetella avium (strain 197N).